Reading from the N-terminus, the 180-residue chain is UPF0303 protein PSEEN3311 (180 aa).

The protein belongs to the UPF0303 family.

The chain is UPF0303 protein PSEEN3311 from Pseudomonas entomophila (strain L48).